The following is a 232-amino-acid chain: 5'-methylthioadenosine/S-adenosylhomocysteine nucleosidase (232 aa).

The active-site Proton acceptor is the Glu12. Substrate contacts are provided by residues Gly78, Ile152, and 173–174 (ME). Asp197 (proton donor) is an active-site residue.

Belongs to the PNP/UDP phosphorylase family. MtnN subfamily. Homodimer.

The catalysed reaction is S-adenosyl-L-homocysteine + H2O = S-(5-deoxy-D-ribos-5-yl)-L-homocysteine + adenine. The enzyme catalyses S-methyl-5'-thioadenosine + H2O = 5-(methylsulfanyl)-D-ribose + adenine. It carries out the reaction 5'-deoxyadenosine + H2O = 5-deoxy-D-ribose + adenine. The protein operates within amino-acid biosynthesis; L-methionine biosynthesis via salvage pathway; S-methyl-5-thio-alpha-D-ribose 1-phosphate from S-methyl-5'-thioadenosine (hydrolase route): step 1/2. Its function is as follows. Catalyzes the irreversible cleavage of the glycosidic bond in both 5'-methylthioadenosine (MTA) and S-adenosylhomocysteine (SAH/AdoHcy) to adenine and the corresponding thioribose, 5'-methylthioribose and S-ribosylhomocysteine, respectively. Also cleaves 5'-deoxyadenosine, a toxic by-product of radical S-adenosylmethionine (SAM) enzymes, into 5-deoxyribose and adenine. Thus, is required for in vivo function of the radical SAM enzymes biotin synthase and lipoic acid synthase, that are inhibited by 5'-deoxyadenosine accumulation. In Edwardsiella ictaluri (strain 93-146), this protein is 5'-methylthioadenosine/S-adenosylhomocysteine nucleosidase.